Consider the following 174-residue polypeptide: RNA pyrophosphohydrolase (174 aa).

Residues 6 to 149 (GFRANVGIII…KRDVYRKVMK (144 aa)) enclose the Nudix hydrolase domain. A Nudix box motif is present at residues 38–59 (GGVDDGETAEEAMYRELYEEVG).

This sequence belongs to the Nudix hydrolase family. RppH subfamily. It depends on a divalent metal cation as a cofactor.

In terms of biological role, accelerates the degradation of transcripts by removing pyrophosphate from the 5'-end of triphosphorylated RNA, leading to a more labile monophosphorylated state that can stimulate subsequent ribonuclease cleavage. This is RNA pyrophosphohydrolase from Shewanella baltica (strain OS223).